The primary structure comprises 256 residues: HTH-type transcriptional regulator PrtR (256 aa).

The 54-residue stretch at 16–69 folds into the HTH cro/C1-type domain; it reads LKQAMAMRNLKQETLAEAAGVSQNTIHKLTSGKAQSTRKLIEIAAALGVSPVWL. Positions 27–46 form a DNA-binding region, H-T-H motif; sequence QETLAEAAGVSQNTIHKLTS.

Represses the promoter activity of the prtN gene. This Pseudomonas aeruginosa (strain ATCC 15692 / DSM 22644 / CIP 104116 / JCM 14847 / LMG 12228 / 1C / PRS 101 / PAO1) protein is HTH-type transcriptional regulator PrtR (prtR).